Reading from the N-terminus, the 204-residue chain is Minor allergen Alt a 7 (204 aa).

In terms of domain architecture, Flavodoxin-like spans 5 to 195; the sequence is IAIVYYSMYG…NIAQAQGKAF (191 aa).

It belongs to the WrbA family.

It is found in the cytoplasm. This is Minor allergen Alt a 7 (ALTA7) from Alternaria alternata (Alternaria rot fungus).